We begin with the raw amino-acid sequence, 162 residues long: Globin CTT-VI (162 aa).

The signal sequence occupies residues 1 to 15 (MKFLVLALCIAAASA). Positions 17 to 161 (VLTTEQADLV…TYAMLFSAMD (145 aa)) constitute a Globin domain. Positions 75 and 110 each coordinate heme b.

Belongs to the globin family. As to quaternary structure, homodimer.

The sequence is that of Globin CTT-VI (CTT-6) from Chironomus thummi thummi (Midge).